Consider the following 133-residue polypeptide: DNA-binding protein StpA (133 aa).

The segment at 81–115 is disordered; the sequence is AMPRSAKKRQPRPAKYRFTDFNGEEKTWTGQGRTP. The segment covering 85–95 has biased composition (basic residues); it reads SAKKRQPRPAK. The DNA-binding element occupies 111-116; that stretch reads QGRTPK.

The protein belongs to the histone-like protein H-NS family. As to quaternary structure, forms homodimers, can interact with H-NS.

Its subcellular location is the cytoplasm. It is found in the nucleoid. A DNA-binding protein that acts in a fashion similar to H-NS, repressing gene transcription. A subset of H-NS/StpA-regulated genes require auxillary proteins for repression; these auxillary proteins (Hha and other similar proteins) may also modulate oligomerization of the H-NS/StpA complex. The protein is DNA-binding protein StpA (stpA) of Salmonella typhi.